We begin with the raw amino-acid sequence, 337 residues long: MGFLRRQLREQFEKKKPEALQADIRMISGCQDVQTSADVSNVSSFQLPDPAGNAGGACTSTLLNVLYKDHQTPEDTMSFVELLNKMRENLEAKGFSQVPQLTASHPIDVNDDFDLVPPAATGTRRALLIGINYVGHEQGVLRGCHNDVKNMVEYIKAVHGFEDENITILMDDGEHTAPTHANMIAAYKKIVALSKADDALFCHFSGHGAKIRDDDRGEEDDGYDETLVPIDYHENGMIRDDDLYDILIKPLVQGVHLVCLMDCCHSGTVLDLPYVYKADGNFTEMEIDENFDFKKLLGKFGIDDFDKFGGEALGKINGDALGKVGKDALGKLNKFFG.

2 propeptides span residues 1–6 and 116–125; these read MGFLRR and VPPAATGTRR. Cys202 is subject to Cysteine sulfenic acid (-SOH). A disulfide bridge connects residues Cys202 and Cys259. His207 is an active-site residue. Residues Asp224, Asp240, and Asp241 each contribute to the Ca(2+) site. Cys264 is a catalytic residue. Asp271 lines the Ca(2+) pocket. The propeptide occupies 290–337; it reads NFDFKKLLGKFGIDDFDKFGGEALGKINGDALGKVGKDALGKLNKFFG.

The protein belongs to the peptidase C14B family. Post-translationally, auto-proteolytic cleavage into a large and a small subunit which probably remain associated by non-covalent bonds. In terms of processing, following oxidative stress, the oxidation of Cys-202 leads to the formation of a disulfide bond between Cys-202 and Cys-259 which enhances catalytic activity.

With respect to regulation, activated by Ca(2+). Its function is as follows. Cysteine protease that cleaves specifically after arginine residues. In Phaeodactylum tricornutum (strain CCAP 1055/1), this protein is Metacaspase III c.